The sequence spans 378 residues: GDP-mannose-dependent alpha-mannosyltransferase (378 aa).

This sequence belongs to the glycosyltransferase group 1 family. Glycosyltransferase 4 subfamily.

The protein operates within phospholipid metabolism; phosphatidylinositol metabolism. Its function is as follows. Catalyzes the addition of a mannose residue from GDP-D-mannose to GlcAGroAc2 to generate 1,2-di-O-C16/C18:1-(alpha-D-mannopyranosyl)-(1-4)-(alpha-D-glucopyranosyluronic acid)-(1-3)-glycerol(ManGlcAGroAc2). This chain is GDP-mannose-dependent alpha-mannosyltransferase (mgtA), found in Mycobacterium tuberculosis (strain CDC 1551 / Oshkosh).